Reading from the N-terminus, the 251-residue chain is 3-deoxy-manno-octulosonate cytidylyltransferase (251 aa).

It belongs to the KdsB family.

It localises to the cytoplasm. The enzyme catalyses 3-deoxy-alpha-D-manno-oct-2-ulosonate + CTP = CMP-3-deoxy-beta-D-manno-octulosonate + diphosphate. Its pathway is nucleotide-sugar biosynthesis; CMP-3-deoxy-D-manno-octulosonate biosynthesis; CMP-3-deoxy-D-manno-octulosonate from 3-deoxy-D-manno-octulosonate and CTP: step 1/1. It functions in the pathway bacterial outer membrane biogenesis; lipopolysaccharide biosynthesis. Activates KDO (a required 8-carbon sugar) for incorporation into bacterial lipopolysaccharide in Gram-negative bacteria. The protein is 3-deoxy-manno-octulosonate cytidylyltransferase of Rhizobium leguminosarum bv. trifolii (strain WSM2304).